Here is a 117-residue protein sequence, read N- to C-terminus: Large ribosomal subunit protein uL18 (117 aa).

Belongs to the universal ribosomal protein uL18 family. In terms of assembly, part of the 50S ribosomal subunit; part of the 5S rRNA/L5/L18/L25 subcomplex. Contacts the 5S and 23S rRNAs.

This is one of the proteins that bind and probably mediate the attachment of the 5S RNA into the large ribosomal subunit, where it forms part of the central protuberance. This Pectobacterium carotovorum subsp. carotovorum (strain PC1) protein is Large ribosomal subunit protein uL18.